The following is a 353-amino-acid chain: Methylthioribose-1-phosphate isomerase (353 aa).

Substrate-binding positions include 51 to 53 (RGA), Arg94, and Gln199. The active-site Proton donor is Asp240. 250-251 (NK) contacts substrate.

Belongs to the eIF-2B alpha/beta/delta subunits family. MtnA subfamily. As to quaternary structure, homodimer.

The enzyme catalyses 5-(methylsulfanyl)-alpha-D-ribose 1-phosphate = 5-(methylsulfanyl)-D-ribulose 1-phosphate. It participates in amino-acid biosynthesis; L-methionine biosynthesis via salvage pathway; L-methionine from S-methyl-5-thio-alpha-D-ribose 1-phosphate: step 1/6. Its function is as follows. Catalyzes the interconversion of methylthioribose-1-phosphate (MTR-1-P) into methylthioribulose-1-phosphate (MTRu-1-P). The sequence is that of Methylthioribose-1-phosphate isomerase from Bacillus velezensis (strain DSM 23117 / BGSC 10A6 / LMG 26770 / FZB42) (Bacillus amyloliquefaciens subsp. plantarum).